The following is a 351-amino-acid chain: Adenine deaminase (351 aa).

His-20, His-22, and His-200 together coordinate Zn(2+). Glu-203 functions as the Proton donor in the catalytic mechanism. Residue Asp-281 participates in Zn(2+) binding. Asp-282 contributes to the substrate binding site.

The protein belongs to the metallo-dependent hydrolases superfamily. Adenosine and AMP deaminases family. Adenine deaminase type 2 subfamily. Requires Zn(2+) as cofactor.

It catalyses the reaction adenine + H2O + H(+) = hypoxanthine + NH4(+). Its function is as follows. Catalyzes the hydrolytic deamination of adenine to hypoxanthine. Plays an important role in the purine salvage pathway and in nitrogen catabolism. The sequence is that of Adenine deaminase from Cupriavidus pinatubonensis (strain JMP 134 / LMG 1197) (Cupriavidus necator (strain JMP 134)).